The chain runs to 397 residues: DNA-directed RNA polymerase subunit Rpo1C (397 aa).

Belongs to the RNA polymerase beta' chain family. Part of the RNA polymerase complex.

The protein resides in the cytoplasm. It catalyses the reaction RNA(n) + a ribonucleoside 5'-triphosphate = RNA(n+1) + diphosphate. Functionally, DNA-dependent RNA polymerase (RNAP) catalyzes the transcription of DNA into RNA using the four ribonucleoside triphosphates as substrates. Forms part of the jaw domain. This is DNA-directed RNA polymerase subunit Rpo1C from Methanosarcina acetivorans (strain ATCC 35395 / DSM 2834 / JCM 12185 / C2A).